The sequence spans 120 residues: NAD(P)H-quinone oxidoreductase subunit 3, chloroplastic (120 aa).

3 helical membrane-spanning segments follow: residues 9–29 (IFWA…FISG), 64–84 (MFAL…PWAM), and 88–108 (VLGV…IVGL).

Belongs to the complex I subunit 3 family. As to quaternary structure, NDH is composed of at least 16 different subunits, 5 of which are encoded in the nucleus.

The protein localises to the plastid. It localises to the chloroplast thylakoid membrane. It carries out the reaction a plastoquinone + NADH + (n+1) H(+)(in) = a plastoquinol + NAD(+) + n H(+)(out). The enzyme catalyses a plastoquinone + NADPH + (n+1) H(+)(in) = a plastoquinol + NADP(+) + n H(+)(out). Functionally, NDH shuttles electrons from NAD(P)H:plastoquinone, via FMN and iron-sulfur (Fe-S) centers, to quinones in the photosynthetic chain and possibly in a chloroplast respiratory chain. The immediate electron acceptor for the enzyme in this species is believed to be plastoquinone. Couples the redox reaction to proton translocation, and thus conserves the redox energy in a proton gradient. The protein is NAD(P)H-quinone oxidoreductase subunit 3, chloroplastic of Panax ginseng (Korean ginseng).